The following is a 307-amino-acid chain: Lipoyl synthase (307 aa).

The [4Fe-4S] cluster site is built by C55, C60, C66, C81, C85, C88, and S292. The region spanning 67 to 281 (WEDREATFLI…ARHAEELGFS (215 aa)) is the Radical SAM core domain.

Belongs to the radical SAM superfamily. Lipoyl synthase family. [4Fe-4S] cluster serves as cofactor.

The protein localises to the cytoplasm. The catalysed reaction is [[Fe-S] cluster scaffold protein carrying a second [4Fe-4S](2+) cluster] + N(6)-octanoyl-L-lysyl-[protein] + 2 oxidized [2Fe-2S]-[ferredoxin] + 2 S-adenosyl-L-methionine + 4 H(+) = [[Fe-S] cluster scaffold protein] + N(6)-[(R)-dihydrolipoyl]-L-lysyl-[protein] + 4 Fe(3+) + 2 hydrogen sulfide + 2 5'-deoxyadenosine + 2 L-methionine + 2 reduced [2Fe-2S]-[ferredoxin]. It participates in protein modification; protein lipoylation via endogenous pathway; protein N(6)-(lipoyl)lysine from octanoyl-[acyl-carrier-protein]: step 2/2. In terms of biological role, catalyzes the radical-mediated insertion of two sulfur atoms into the C-6 and C-8 positions of the octanoyl moiety bound to the lipoyl domains of lipoate-dependent enzymes, thereby converting the octanoylated domains into lipoylated derivatives. This chain is Lipoyl synthase, found in Mycolicibacterium paratuberculosis (strain ATCC BAA-968 / K-10) (Mycobacterium paratuberculosis).